A 238-amino-acid polypeptide reads, in one-letter code: Small ribosomal subunit protein eS4 (238 aa).

The 73-residue stretch at 38–110 folds into the S4 RNA-binding domain; sequence LPLAIIIRDV…EKKYYALIPI (73 aa).

The protein belongs to the eukaryotic ribosomal protein eS4 family.

This Pyrobaculum islandicum (strain DSM 4184 / JCM 9189 / GEO3) protein is Small ribosomal subunit protein eS4.